The sequence spans 425 residues: tRNA (guanine-N(7)-)-methyltransferase non-catalytic subunit wuho (425 aa).

The segment at 67-102 is disordered; it reads ATCAGKEPGGKEQQLTKQPEEGGTTASGSGVTSTSV. Positions 88-102 are enriched in low complexity; it reads GGTTASGSGVTSTSV. WD repeat units lie at residues 97–138, 142–181, 185–224, 228–266, and 325–365; these read VTST…ARLL, PLAR…APPR, GHLS…DIHS, GHRE…ELLQ, and AGSW…PATS.

Belongs to the WD repeat TRM82 family. As to quaternary structure, forms a heterodimer with the catalytic subunit Mettl1. Interacts with mei-P26 and weakly interacts with bgcn; required for the function or formation of the mei-P26-bgcn-bam-sxl complex. Interacts with nanos; may be involved in mei-P26-dependent derepression of the BMP signaling pathway. Interacts with Myc; the interaction may be mediated by mei-P26 and may be involved in the regulation of ribosome biogenesis. As to expression, in testis, it is present at high level in hub cells, a niche for germline stem cells of testis. Ubiquitously expressed in all testicular cells throughout spermatogenesis. Ubiquitously expressed in all germline and somatic cells of the ovary.

It is found in the nucleus. It localises to the cytoplasm. It participates in tRNA modification; N(7)-methylguanine-tRNA biosynthesis. In terms of biological role, required for the Mettl1-dependent formation of N(7)-methylguanine at position 46 (m7G46) in tRNA. In the Mettl1-wuho methyltransferase complex, it is required to stabilize and induce conformational changes of the catalytic subunit. Required for binding of nanos mRNA and repression of translation by the mei-P26-bgcn-bam-sxl complex. May cooperate with mei-P26 and nanos to derepress the BMP signaling pathway. May cooperate with mei-P26 to suppress expression of a subset of microRNAs. May cooperate with mei-P26 to regulate bam expression levels in germline cells during gametogenesis. Required to promote mitosis to meiosis transition during gametogenesis. May regulate germline cell division in part by regulating ribosome biogenesis. This Drosophila yakuba (Fruit fly) protein is tRNA (guanine-N(7)-)-methyltransferase non-catalytic subunit wuho.